A 51-amino-acid chain; its full sequence is Large ribosomal subunit protein eL39 (51 aa).

It belongs to the eukaryotic ribosomal protein eL39 family.

In terms of biological role, binds specifically to a region in 26S rRNA near the subunit interface. The protein is Large ribosomal subunit protein eL39 (rpl39e) of Sulfolobus acidocaldarius (strain ATCC 33909 / DSM 639 / JCM 8929 / NBRC 15157 / NCIMB 11770).